The sequence spans 335 residues: Vitamin B12 import system permease protein BtuC (335 aa).

The next 9 membrane-spanning stretches (helical) occupy residues 22–42 (LLLL…AGDV), 67–87 (LAVM…QSLF), 94–114 (PGLL…VLLG), 117–137 (LLPV…MTFL), 153–173 (LLVG…AVYF), 200–220 (LVLA…ALNF), 243–263 (VLAI…IGFV), 281–301 (YLLP…DVVA), and 308–328 (AELP…IWLL).

The protein belongs to the binding-protein-dependent transport system permease family. FecCD subfamily. In terms of assembly, the complex is composed of two ATP-binding proteins (BtuD), two transmembrane proteins (BtuC) and a solute-binding protein (BtuF).

Its subcellular location is the cell inner membrane. In terms of biological role, part of the ABC transporter complex BtuCDF involved in vitamin B12 import. Involved in the translocation of the substrate across the membrane. This Serratia proteamaculans (strain 568) protein is Vitamin B12 import system permease protein BtuC.